We begin with the raw amino-acid sequence, 281 residues long: uncharacterized protein (281 aa).

Transmembrane regions (helical) follow at residues leucine 23–alanine 45, isoleucine 65–glycine 87, and threonine 94–serine 116.

The protein belongs to the MscS (TC 1.A.23) family.

The protein resides in the cell membrane. This is an uncharacterized protein from Buchnera aphidicola subsp. Baizongia pistaciae (strain Bp).